A 681-amino-acid chain; its full sequence is MRKKLFGQLQRIGKALMLPVAILPAAGLLLAIGTAMQGESLQHYLPFIQNGGVQTVAKLMTGAGGIIFDNLPMIFALGVAIGLAGGDGVAAIAAFVGYIIMNKTMGDFLQVTPKNIGDPASGYASILGIPTLQTGVFGGIIIGALAAWCYNKFYNINLPSYLGFFAGKRFVPIMMATTSFILAFPMALIWPTIQSGLNAFSTGLLDSNTGVAVFLFGFIKRLLIPFGLHHIFHAPFWFEFGSWKNAAGEIIHGDQRIFIEQIREGAHLTAGKFMQGEFPVMMFGLPAAALAIYHTAKPENKKVVAGLMGSAALTSFLTGITEPLEFSFLFVAPLLFFIHAVLDGLSFLTLYLLDLHLGYTFSGGFIDYFLLGILPNKTQWWLVIPVGLVYAVIYYFVFRFLIVKLKYKTPGREDKQSQAATASATELPYAVLEAMGGKANIKHLDACITRLRVEVNDKSKVDVPGLKDLGASGVLEVGNNMQAIFGPKSDQIKHEMQQIMNGQVVENPTTMEDDKDETVVVAEDKSATSELSHIVHAPLTGEVTPLSEVPDQVFSEKMMGDGIAIKPSQGEVRAPFNGKVQMIFPTKHAIGLVSDSGLELLIHIGLDTVKLNGEGFTLHVEEGQEVKQGDLLINFDLDYIRNHAKSDITPIIVTQGNITNLDFKQGEHGNISFGDQLFEAK.

The PTS EIIC type-1 domain maps to 3 to 414 (KKLFGQLQRI…LKYKTPGRED (412 aa)). 10 helical membrane passes run 16-36 (LMLP…GTAM), 73-93 (MIFA…AAIA), 126-146 (ILGI…GALA), 170-190 (FVPI…ALIW), 199-219 (AFST…FGFI), 273-293 (FMQG…LAIY), 303-323 (VVAG…ITEP), 328-348 (FLFV…LSFL), 355-375 (LHLG…GILP), and 383-403 (VIPV…FLIV). A PTS EIIB type-1 domain is found at 425-506 (TELPYAVLEA…QQIMNGQVVE (82 aa)). Residue C447 is the Phosphocysteine intermediate; for EIIB activity of the active site. One can recognise a PTS EIIA type-1 domain in the interval 551–655 (DQVFSEKMMG…SDITPIIVTQ (105 aa)). Catalysis depends on H603, which acts as the Tele-phosphohistidine intermediate; for EIIA activity.

It is found in the cell membrane. The enzyme catalyses N(pros)-phospho-L-histidyl-[protein] + D-glucose(out) = D-glucose 6-phosphate(in) + L-histidyl-[protein]. In terms of biological role, the phosphoenolpyruvate-dependent sugar phosphotransferase system (sugar PTS), a major carbohydrate active transport system, catalyzes the phosphorylation of incoming sugar substrates concomitantly with their translocation across the cell membrane. This system is involved in glucose transport. The polypeptide is PTS system glucose-specific EIICBA component (ptsG) (Staphylococcus aureus (strain NCTC 8325 / PS 47)).